The sequence spans 150 residues: Large ribosomal subunit protein bL9 (150 aa).

This sequence belongs to the bacterial ribosomal protein bL9 family.

Functionally, binds to the 23S rRNA. The sequence is that of Large ribosomal subunit protein bL9 from Neisseria gonorrhoeae (strain ATCC 700825 / FA 1090).